The sequence spans 202 residues: NAD(P)H dehydrogenase (quinone) 2 (202 aa).

One can recognise a Flavodoxin-like domain in the interval 4-190 (VLVLYYSSYG…AGAFHQGEIV (187 aa)). FMN-binding positions include 10 to 15 (SSYGHI) and 78 to 80 (TRF). Y12 serves as a coordination point for NAD(+). W98 contacts substrate. FMN-binding positions include 113–119 (STGTQHG) and H134.

It belongs to the WrbA family. It depends on FMN as a cofactor.

It carries out the reaction a quinone + NADH + H(+) = a quinol + NAD(+). The enzyme catalyses a quinone + NADPH + H(+) = a quinol + NADP(+). The sequence is that of NAD(P)H dehydrogenase (quinone) 2 from Rhizobium meliloti (strain 1021) (Ensifer meliloti).